A 321-amino-acid polypeptide reads, in one-letter code: Probable 3-hydroxyisobutyrate dehydrogenase, mitochondrial (321 aa).

Residues 23-52 (KTVG…IVFD), 86-87 (LP), and Thr-117 each bind NAD(+). The active site involves Lys-192. Lys-267 lines the NAD(+) pocket.

This sequence belongs to the HIBADH-related family. 3-hydroxyisobutyrate dehydrogenase subfamily.

It is found in the mitochondrion. It catalyses the reaction 3-hydroxy-2-methylpropanoate + NAD(+) = 2-methyl-3-oxopropanoate + NADH + H(+). The protein operates within amino-acid degradation; L-valine degradation. In Dictyostelium discoideum (Social amoeba), this protein is Probable 3-hydroxyisobutyrate dehydrogenase, mitochondrial (hibA).